Here is a 614-residue protein sequence, read N- to C-terminus: RNA polymerase sigma factor RpoD (614 aa).

The interval 178 to 222 (THIGSDLSQSERDKDDSKDDSKDDDEDEEEEGPKGPDPEESKERF) is disordered. The segment covering 186–198 (QSERDKDDSKDDS) has biased composition (basic and acidic residues). Acidic residues predominate over residues 199 to 208 (KDDDEDEEEE). Residues 209-222 (GPKGPDPEESKERF) show a composition bias toward basic and acidic residues. Residues 380–450 (MVEANLRLVI…TRSIADQART (71 aa)) are sigma-70 factor domain-2. Residues 404-407 (DLIQ) carry the Interaction with polymerase core subunit RpoC motif. The interval 459 to 535 (ETINKLNRIS…DTTLELPLDS (77 aa)) is sigma-70 factor domain-3. The sigma-70 factor domain-4 stretch occupies residues 548–601 (VLAGLTAREAKVLRMRFGIDMNTDHTLEEVGKQFDVTRERIRQIEAKALRKLRH). Positions 574 to 593 (LEEVGKQFDVTRERIRQIEA) form a DNA-binding region, H-T-H motif.

This sequence belongs to the sigma-70 factor family. RpoD/SigA subfamily. As to quaternary structure, interacts transiently with the RNA polymerase catalytic core.

It is found in the cytoplasm. Sigma factors are initiation factors that promote the attachment of RNA polymerase to specific initiation sites and are then released. This sigma factor is the primary sigma factor during exponential growth. The sequence is that of RNA polymerase sigma factor RpoD from Shewanella violacea (strain JCM 10179 / CIP 106290 / LMG 19151 / DSS12).